The chain runs to 185 residues: Thiol:disulfide interchange protein DsbE (185 aa).

The Cytoplasmic segment spans residues 1–4 (MKRN). A helical transmembrane segment spans residues 5-25 (VLLLPLLIFLLIAAALLWQLA). Residues 26–185 (RNAQGDDPTN…WDRYSREAAQ (160 aa)) are Periplasmic-facing. A Thioredoxin domain is found at 39-177 (ALTGKPVPAF…WESELKPLWD (139 aa)). Residues Cys80 and Cys83 are joined by a disulfide bond.

This sequence belongs to the thioredoxin family. DsbE subfamily.

It is found in the cell inner membrane. Functionally, involved in disulfide bond formation. Catalyzes a late, reductive step in the assembly of periplasmic c-type cytochromes, probably the reduction of disulfide bonds of the apocytochrome c to allow covalent linkage with the heme. Possible subunit of a heme lyase. In Salmonella typhimurium (strain LT2 / SGSC1412 / ATCC 700720), this protein is Thiol:disulfide interchange protein DsbE (dsbE1).